Here is a 371-residue protein sequence, read N- to C-terminus: uncharacterized protein (371 aa).

Belongs to the glycerate kinase type-1 family.

This is an uncharacterized protein from Synechocystis sp. (strain ATCC 27184 / PCC 6803 / Kazusa).